Here is a 272-residue protein sequence, read N- to C-terminus: Enoyl-[acyl-carrier-protein] reductase [NADH] 1 (272 aa).

Residues glycine 17, 23-24 (SI), glutamine 44, 68-69 (DV), and isoleucine 96 each bind NAD(+). Active-site proton acceptor residues include tyrosine 149 and tyrosine 159. NAD(+) contacts are provided by residues lysine 166 and 195–199 (IKTLA).

The protein belongs to the short-chain dehydrogenases/reductases (SDR) family. FabI subfamily.

It localises to the cell inner membrane. It carries out the reaction a 2,3-saturated acyl-[ACP] + NAD(+) = a (2E)-enoyl-[ACP] + NADH + H(+). Its pathway is lipid metabolism; fatty acid biosynthesis. This chain is Enoyl-[acyl-carrier-protein] reductase [NADH] 1 (fabI1), found in Rhizobium meliloti (strain 1021) (Ensifer meliloti).